An 895-amino-acid chain; its full sequence is Eukaryotic translation initiation factor 3 subunit C (895 aa).

Residues 1 to 108 (MSGFFRKVGD…DSDSEEEVKK (108 aa)) are disordered. 2 stretches are compositionally biased toward acidic residues: residues 11–31 (SDSESDISSSEEELSELESGD) and 52–75 (DDSDSDDDDSDDDDQDSLDSDDDN). A PCI domain is found at 638 to 812 (FHMHINLELL…NVVSFHRLEL (175 aa)). The segment covering 838–860 (DAKLGEGKEQRSGAGGERGDREG) has biased composition (basic and acidic residues). Residues 838-895 (DAKLGEGKEQRSGAGGERGDREGGQPGGRRERRGGSAARGRGRGRGRAQQFQALGQKV) form a disordered region. Residues 884-895 (RAQQFQALGQKV) are compositionally biased toward low complexity.

Belongs to the eIF-3 subunit C family. As to quaternary structure, component of the eukaryotic translation initiation factor 3 (eIF-3) complex.

It localises to the cytoplasm. Component of the eukaryotic translation initiation factor 3 (eIF-3) complex, which is involved in protein synthesis of a specialized repertoire of mRNAs and, together with other initiation factors, stimulates binding of mRNA and methionyl-tRNAi to the 40S ribosome. The eIF-3 complex specifically targets and initiates translation of a subset of mRNAs involved in cell proliferation. The polypeptide is Eukaryotic translation initiation factor 3 subunit C (Mycosarcoma maydis (Corn smut fungus)).